We begin with the raw amino-acid sequence, 553 residues long: Ribonuclease J 2 (553 aa).

Histidine 69, histidine 71, histidine 138, and aspartate 160 together coordinate Zn(2+). A substrate-binding site is contributed by 361–365 (RVSGH).

It belongs to the metallo-beta-lactamase superfamily. RNA-metabolizing metallo-beta-lactamase-like family. Bacterial RNase J subfamily. As to quaternary structure, homodimer, may be a subunit of the RNA degradosome. Zn(2+) is required as a cofactor.

It is found in the cytoplasm. In terms of biological role, an RNase that has 5'-3' exonuclease and possibly endonuclease activity. Involved in maturation of rRNA and in some organisms also mRNA maturation and/or decay. Has an overlapping but not completely redundant role with RNase J1 in the decay of mRNA. This chain is Ribonuclease J 2, found in Streptococcus pyogenes serotype M3 (strain ATCC BAA-595 / MGAS315).